Here is a 256-residue protein sequence, read N- to C-terminus: 3-hydroxy-5-phosphonooxypentane-2,4-dione thiolase (256 aa).

Catalysis depends on K168, which acts as the Schiff-base intermediate with substrate.

This sequence belongs to the DeoC/FbaB aldolase family. In terms of assembly, homodecamer.

Its subcellular location is the cytoplasm. It carries out the reaction dihydroxyacetone phosphate + acetyl-CoA = 3-hydroxy-2,4-dioxopentyl phosphate + CoA. In terms of biological role, involved in the degradation of phospho-AI-2, thereby terminating induction of the lsr operon and closing the AI-2 signaling cycle. Catalyzes the transfer of an acetyl moiety from 3-hydroxy-5-phosphonooxypentane-2,4-dione to CoA to form glycerone phosphate and acetyl-CoA. The chain is 3-hydroxy-5-phosphonooxypentane-2,4-dione thiolase (lsrF) from Shigella flexneri serotype 5b (strain 8401).